A 147-amino-acid chain; its full sequence is Hemoglobin subunit beta (147 aa).

Val-2 is modified (N-acetylvaline). Residues 3–147 (HLTPEEKSAV…VANALAHKYH (145 aa)) form the Globin domain. Position 13 is a phosphothreonine (Thr-13). Phosphoserine is present on Ser-45. Position 60 is an N6-acetyllysine (Lys-60). His-64 contacts heme b. At Lys-83 the chain carries N6-acetyllysine. Residue His-93 coordinates heme b. Position 94 is an S-nitrosocysteine (Cys-94). N6-acetyllysine is present on Lys-145.

This sequence belongs to the globin family. In terms of assembly, heterotetramer of two alpha chains and two beta chains. In terms of tissue distribution, red blood cells.

Involved in oxygen transport from the lung to the various peripheral tissues. The protein is Hemoglobin subunit beta (HBB) of Gorilla gorilla gorilla (Western lowland gorilla).